A 255-amino-acid polypeptide reads, in one-letter code: Geranylgeranylglyceryl phosphate synthase (255 aa).

Residues D34 and T64 each contribute to the Mg(2+) site. Residues 182–188 (YLEAGSG), 213–214 (GG), and 235–236 (GN) contribute to the sn-glycerol 1-phosphate site.

This sequence belongs to the GGGP/HepGP synthase family. Group II subfamily. Mg(2+) serves as cofactor.

Its subcellular location is the cytoplasm. The catalysed reaction is sn-glycerol 1-phosphate + (2E,6E,10E)-geranylgeranyl diphosphate = sn-3-O-(geranylgeranyl)glycerol 1-phosphate + diphosphate. It functions in the pathway membrane lipid metabolism; glycerophospholipid metabolism. Functionally, prenyltransferase that catalyzes the transfer of the geranylgeranyl moiety of geranylgeranyl diphosphate (GGPP) to the C3 hydroxyl of sn-glycerol-1-phosphate (G1P). This reaction is the first ether-bond-formation step in the biosynthesis of archaeal membrane lipids. In Saccharolobus islandicus (strain M.14.25 / Kamchatka #1) (Sulfolobus islandicus), this protein is Geranylgeranylglyceryl phosphate synthase.